The primary structure comprises 110 residues: uncharacterized protein (110 aa).

Its subcellular location is the mitochondrion. This is an uncharacterized protein from Arabidopsis thaliana (Mouse-ear cress).